Reading from the N-terminus, the 230-residue chain is UPF0173 metal-dependent hydrolase OEOE_1287 (230 aa).

This sequence belongs to the UPF0173 family.

This Oenococcus oeni (strain ATCC BAA-331 / PSU-1) protein is UPF0173 metal-dependent hydrolase OEOE_1287.